The sequence spans 529 residues: Bifunctional purine biosynthesis protein PurH (529 aa).

Residues 1–148 (MQQRRPVRRA…KNHKDVAIVV (148 aa)) enclose the MGS-like domain.

This sequence belongs to the PurH family.

The enzyme catalyses (6R)-10-formyltetrahydrofolate + 5-amino-1-(5-phospho-beta-D-ribosyl)imidazole-4-carboxamide = 5-formamido-1-(5-phospho-D-ribosyl)imidazole-4-carboxamide + (6S)-5,6,7,8-tetrahydrofolate. It catalyses the reaction IMP + H2O = 5-formamido-1-(5-phospho-D-ribosyl)imidazole-4-carboxamide. The protein operates within purine metabolism; IMP biosynthesis via de novo pathway; 5-formamido-1-(5-phospho-D-ribosyl)imidazole-4-carboxamide from 5-amino-1-(5-phospho-D-ribosyl)imidazole-4-carboxamide (10-formyl THF route): step 1/1. Its pathway is purine metabolism; IMP biosynthesis via de novo pathway; IMP from 5-formamido-1-(5-phospho-D-ribosyl)imidazole-4-carboxamide: step 1/1. This chain is Bifunctional purine biosynthesis protein PurH, found in Klebsiella pneumoniae subsp. pneumoniae (strain ATCC 700721 / MGH 78578).